We begin with the raw amino-acid sequence, 360 residues long: Nucleoporin SEH1-B (360 aa).

6 WD repeats span residues 10-49, 55-96, 111-152, 160-210, 217-258, and 276-315; these read DHKD…NWHC, THSG…SNDK, DSRT…NLSQ, SCKL…RKYA, SVSD…KELS, and NHNS…NWKC.

Belongs to the WD repeat SEC13 family. In terms of assembly, component of the Nup107-160 subcomplex of the nuclear pore complex (NPC). The Nup107-160 subcomplex includes NUP160, NUP133, NUP107, NUP98, NUP85, NUP43, NUP37, SEH1 and SEC13. Component of the GATOR2 subcomplex, composed of MIOS, SEC13, SEH1L, WDR24 and WDR59. The GATOR2 complex interacts with CASTOR1 and CASTOR2; the interaction is negatively regulated by arginine. The GATOR2 complex interacts with SESN1, SESN2 and SESN3; the interaction is negatively regulated by amino acids.

It localises to the chromosome. It is found in the centromere. The protein localises to the kinetochore. Its subcellular location is the nucleus. The protein resides in the nuclear pore complex. It localises to the lysosome membrane. The GATOR2 complex is negatively regulated by the upstream amino acid sensors CASTOR1 and SESN2, which sequester the GATOR2 complex in absence of amino acids. In the presence of abundant amino acids, GATOR2 is released from CASTOR1 and SESN2 and activated. Component of the Nup107-160 subcomplex of the nuclear pore complex (NPC). The Nup107-160 subcomplex is required for the assembly of a functional NPC. The Nup107-160 subcomplex is also required for normal kinetochore microtubule attachment, mitotic progression and chromosome segregation. This subunit plays a role in recruitment of the Nup107-160 subcomplex to the kinetochore. Functionally, as a component of the GATOR2 complex, functions as an activator of the amino acid-sensing branch of the mTORC1 signaling pathway. The GATOR2 complex indirectly activates mTORC1 through the inhibition of the GATOR1 subcomplex. GATOR2 probably acts as an E3 ubiquitin-protein ligase toward GATOR1. In the presence of abundant amino acids, the GATOR2 complex mediates ubiquitination of the NPRL2 core component of the GATOR1 complex, leading to GATOR1 inactivation. In the absence of amino acids, GATOR2 is inhibited, activating the GATOR1 complex. This is Nucleoporin SEH1-B (seh1l-b) from Xenopus laevis (African clawed frog).